We begin with the raw amino-acid sequence, 440 residues long: Trigger factor (440 aa).

The 86-residue stretch at G163 to P248 folds into the PPIase FKBP-type domain.

Belongs to the FKBP-type PPIase family. Tig subfamily.

The protein resides in the cytoplasm. The catalysed reaction is [protein]-peptidylproline (omega=180) = [protein]-peptidylproline (omega=0). Its function is as follows. Involved in protein export. Acts as a chaperone by maintaining the newly synthesized protein in an open conformation. Functions as a peptidyl-prolyl cis-trans isomerase. The sequence is that of Trigger factor from Acidiphilium cryptum (strain JF-5).